Here is a 783-residue protein sequence, read N- to C-terminus: Tripartite motif-containing protein 67 (783 aa).

An RING-type; degenerate zinc finger spans residues C7–E42. Residues A206–P253 form a B box-type 1; degenerate zinc finger. Residues K247–S295 form a disordered region. The segment covering Q252 to A261 has biased composition (pro residues). Over residues P275–G293 the composition is skewed to gly residues. A B box-type 2 zinc finger spans residues R298–L340. Positions 303, 306, 326, and 332 each coordinate Zn(2+). Positions K345–N382 form a coiled coil. Residues I448–I506 form the COS domain. The 95-residue stretch at P513–V607 folds into the Fibronectin type-III domain. The B30.2/SPRY domain maps to N589–L780.

The protein belongs to the TRIM/RBCC family.

The protein resides in the cytoplasm. It is found in the cytoskeleton. This is Tripartite motif-containing protein 67 (TRIM67) from Homo sapiens (Human).